We begin with the raw amino-acid sequence, 66 residues long: DNA-directed RNA polymerase subunit Rpo10 (66 aa).

Cys-7, Cys-10, Cys-44, and Cys-45 together coordinate Zn(2+).

The protein belongs to the archaeal Rpo10/eukaryotic RPB10 RNA polymerase subunit family. As to quaternary structure, part of the RNA polymerase complex. Zn(2+) serves as cofactor.

The protein localises to the cytoplasm. The catalysed reaction is RNA(n) + a ribonucleoside 5'-triphosphate = RNA(n+1) + diphosphate. In terms of biological role, DNA-dependent RNA polymerase (RNAP) catalyzes the transcription of DNA into RNA using the four ribonucleoside triphosphates as substrates. The chain is DNA-directed RNA polymerase subunit Rpo10 from Hyperthermus butylicus (strain DSM 5456 / JCM 9403 / PLM1-5).